The chain runs to 246 residues: Proteasome subunit alpha type-6 (246 aa).

It belongs to the peptidase T1A family. The 26S proteasome consists of a 20S proteasome core and two 19S regulatory subunits. The 20S proteasome core is composed of 28 subunits that are arranged in four stacked rings, resulting in a barrel-shaped structure. The two end rings are each formed by seven alpha subunits, and the two central rings are each formed by seven beta subunits. The catalytic chamber with the active sites is on the inside of the barrel.

It localises to the cytoplasm. Its subcellular location is the nucleus. Functionally, the proteasome is a multicatalytic proteinase complex which is characterized by its ability to cleave peptides with Arg, Phe, Tyr, Leu, and Glu adjacent to the leaving group at neutral or slightly basic pH. The proteasome has an ATP-dependent proteolytic activity. In Caenorhabditis elegans, this protein is Proteasome subunit alpha type-6 (pas-1).